Consider the following 114-residue polypeptide: Class I hydrophobin 1 (114 aa).

The signal sequence occupies residues 1–20 (MQFTKMSAFATLALATLAAA). Intrachain disulfides connect Cys33–Cys93, Cys40–Cys87, Cys41–Cys74, and Cys94–Cys107.

The protein belongs to the fungal hydrophobin family. In terms of assembly, self-assembles to form functional amyloid fibrils called rodlets. Self-assembly into fibrillar rodlets occurs spontaneously at hydrophobic:hydrophilic interfaces and the rodlets further associate laterally to form amphipathic monolayers.

It localises to the secreted. It is found in the cell wall. In terms of biological role, aerial growth, conidiation, and dispersal of filamentous fungi in the environment rely upon a capability of their secreting small amphipathic proteins called hydrophobins (HPBs) with low sequence identity. Class I can self-assemble into an outermost layer of rodlet bundles on aerial cell surfaces, conferring cellular hydrophobicity that supports fungal growth, development and dispersal; whereas Class II form highly ordered films at water-air interfaces through intermolecular interactions but contribute nothing to the rodlet structure. Pnh1 is a class I hydrophobin that might be involved in the attachment of the hydrophilic wall of hyphae to the hydrophobic surface of wood under inorganic phosphate (Pi)-deficient conditions and enable the mycelium to degrade efficiently the components of wood and to acquire nutrients containing Pi. The sequence is that of Class I hydrophobin 1 from Pholiota nameko.